The sequence spans 188 residues: Putative CC-type chemokine FPV060 (188 aa).

It belongs to the intercrine beta (chemokine CC) family. Highly divergent.

This is Putative CC-type chemokine FPV060 from Fowlpox virus (strain NVSL) (FPV).